A 178-amino-acid chain; its full sequence is Large ribosomal subunit protein eL20y (178 aa).

The protein belongs to the eukaryotic ribosomal protein eL20 family.

The chain is Large ribosomal subunit protein eL20y (RPL18AB) from Arabidopsis thaliana (Mouse-ear cress).